A 236-amino-acid polypeptide reads, in one-letter code: Peroxisomal membrane protein 11D (236 aa).

N-acetylglycine is present on Gly2. The Cytoplasmic segment spans residues Gly2–Lys92. A helical transmembrane segment spans residues Asn93 to Gly109. Over Arg110 to Thr207 the chain is Lumenal. Residues Pro208–Leu227 traverse the membrane as a helical segment. The Cytoplasmic portion of the chain corresponds to Pro228–Pro236.

This sequence belongs to the peroxin-11 family. As to quaternary structure, homooligomer. Interacts with ARC5 and FIS1B on peroxisomes. As to expression, expressed in developing siliques.

It is found in the peroxisome membrane. In terms of biological role, involved in peroxisomal proliferation. Promotes peroxisomal duplication, aggregation or elongation without fission. In Arabidopsis thaliana (Mouse-ear cress), this protein is Peroxisomal membrane protein 11D (PEX11D).